Here is a 198-residue protein sequence, read N- to C-terminus: Holliday junction resolvase RecU (198 aa).

Residues 1–21 form a disordered region; it reads MVNYPHKLSSQKRQPSLSQPK. Residues 11–21 show a composition bias toward polar residues; sequence QKRQPSLSQPK. 4 residues coordinate Mg(2+): Thr-81, Asp-83, Glu-96, and Gln-115.

This sequence belongs to the RecU family. Mg(2+) serves as cofactor.

It is found in the cytoplasm. The enzyme catalyses Endonucleolytic cleavage at a junction such as a reciprocal single-stranded crossover between two homologous DNA duplexes (Holliday junction).. Endonuclease that resolves Holliday junction intermediates in genetic recombination. Cleaves mobile four-strand junctions by introducing symmetrical nicks in paired strands. Promotes annealing of linear ssDNA with homologous dsDNA. Required for DNA repair, homologous recombination and chromosome segregation. The protein is Holliday junction resolvase RecU of Streptococcus pneumoniae (strain Taiwan19F-14).